A 90-amino-acid polypeptide reads, in one-letter code: Small ribosomal subunit protein bS18 (90 aa).

The tract at residues 1–24 (MKPMRQKPGRGQGNKSISNALASK) is disordered.

The protein belongs to the bacterial ribosomal protein bS18 family. Part of the 30S ribosomal subunit. Forms a tight heterodimer with protein bS6.

Binds as a heterodimer with protein bS6 to the central domain of the 16S rRNA, where it helps stabilize the platform of the 30S subunit. In Chlorobium phaeovibrioides (strain DSM 265 / 1930) (Prosthecochloris vibrioformis (strain DSM 265)), this protein is Small ribosomal subunit protein bS18.